A 1548-amino-acid chain; its full sequence is MAEREVESGPRKRFEQKSGAVFDEIVENCGGIMDTEMSEDIDHNLTPTLDSMSYGMPNQTGSENSLLDEDDYFLNSGDLAGIPVVGSDNEDEQDFSSKDNLVSSIHTDDSLEVERRVTQHESDNENEIQIQNKLKKDFPKQFDQVSVFKSIRKDFSLVRENSKETFSGKEKNRDLTYEREKRLDKPHKDLDSRLKSSFFDKAANQVEETLHTHLPQTPETNFRDSSYPFANKESIGSELGNSFASNIRIKEEPLDDEYDKAMAPQQGLLDKIKDEPDNAQEYSHGQQQKTQEGELKISAVFSVSGSPLAPQLTTGFQPSLASSGMNKMLPSVPATAVRVSCSGCKKILQKGQTAYQRKGSTQLFCSTLCLTGYTVPPARPPPPLTKKTCSSCSKDILNPKDVISAQFENTTTSKDFCSQSCLSTYELKKKPIVTINTNSISTKCSMCQKNAVIRHEVNYQNVVHKLCSDACFSKFRSANNLTMNCCENCGGYCYSGSGQCHMLQIEGQSKKFCSSSCITAYKQKSAKITPCALCKSLRSSAEMIENTNSLGKTELFCSVNCLSAYRVKMVTSAGVQVQCNSCKTSAIPQYHLAMSDGSIRNFCSYSCVVAFQNLFNKPTGMNSSVVPLSQGQVIVSIPTGSTVSAGGGSTSAVSPTSISSSAAAGLQRLAAQSQHVGFARSVVKLKCQHCNRLFATKPELLDYKGKMFQFCGKNCSDEYKKINNVMAMCEYCKIEKIVKETVRFSGADKSFCSEGCKLLYKHDLAKRWGNHCKMCSYCLQTSPKLVQNNLGGKVEEFCCEECMSKYTVLFYQMAKCDACKRQGKLSESLKWRGEMKHFCNLLCILMFCNQQSVCDPPSQNNAANISMVQAASAGPPSLRKDSTPVIANVVSLASAPAAQPTVNSNSVLQGAVPTVTAKIIGDASTQTDALKLPPSQPPRLLKNKALLCKPITQTKATSCKPHTQNKECQTEDTPSQPQIIVVPVPVPVFVPIPLHLYTQYAPVPFGIPVPMPVPMLIPSSMDSEDKVTESIEDIKEKLPTHPFEADLLEMAEMIAEDEEKKTLSQGESQTSEHELFLDTKIFEKDQGSTYSGDLESEAVSTPHSWEEELNHYALKSNAVQEADSELKQFSKGETEQDLEADFPSDSFDPLNKGQGIQARSRTRRRHRDGFPQPRRRGRKKSIVAVEPRSLIQGAFQGCSVSGMTLKYMYGVNAWKNWVQWKNAKEEQGDLKCGGVEQASSSPRSDPLGSTQDHALSQESSEPGCRVRSIKLKEDILSCTFAELSLGLCQFIQEVRRPNGEKYDPDSILYLCLGIQQYLFENGRIDNIFTEPYSRFMIELTKLLKIWEPTILPNGYMFSRIEEEHLWECKQLGAYSPIVLLNTLLFFNTKYFQLKNVTEHLKLSFAHVMRRTRTLKYSTKMTYLRFFPPLQKQESEPDKLTVGKRKRNEDDEVPVGVEMAENTDNPLRCPVRLYEFYLSKCSESVKQRNDVFYLQPERSCVPNSPMWYSTFPIDPGTLDTMLTRILMVREVHEELAKAKSEDSDVELSD.

Residue Ala-2 is modified to N-acetylalanine. Residue Thr-107 is modified to Phosphothreonine. Phosphoserine occurs at positions 110 and 122. Glycyl lysine isopeptide (Lys-Gly) (interchain with G-Cter in SUMO2) cross-links involve residues Lys-140 and Lys-149. Ser-162 is modified (phosphoserine). Residues 162-189 (SKETFSGKEKNRDLTYEREKRLDKPHKD) form a disordered region. Lys-195 is covalently cross-linked (Glycyl lysine isopeptide (Lys-Gly) (interchain with G-Cter in SUMO2)). The residue at position 197 (Ser-197) is a Phosphoserine. Glycyl lysine isopeptide (Lys-Gly) (interchain with G-Cter in SUMO2) cross-links involve residues Lys-201 and Lys-232. A Phosphoserine modification is found at Ser-242. Lys-250 participates in a covalent cross-link: Glycyl lysine isopeptide (Lys-Gly) (interchain with G-Cter in SUMO1); alternate. A Glycyl lysine isopeptide (Lys-Gly) (interchain with G-Cter in SUMO2); alternate cross-link involves residue Lys-250. Residues Lys-260, Lys-271, Lys-273, Lys-289, Lys-327, Lys-400, Lys-428, and Lys-430 each participate in a glycyl lysine isopeptide (Lys-Gly) (interchain with G-Cter in SUMO2) cross-link. 9 consecutive MYM-type zinc fingers follow at residues 362-402 (QLFC…PKDV), 414-457 (KDFC…RHEV), 464-499 (HKLCSDACFSKFRSANNLTMNCCENCGGYCYSGSGQ), 510-544 (KKFCSSSCITAYKQKSAKITPCALCKSLRSSAEMI), 554-592 (ELFCSVNCLSAYRVKMVTSAGVQVQCNSCKTSAIPQYHL), 600-631 (RNFCSYSCVVAFQNLFNKPTGMNSSVVPLSQG), 708-742 (FQFCGKNCSDEYKKINNVMAMCEYCKIEKIVKETV), 749-788 (KSFCSEGCKLLYKHDLAKRWGNHCKMCSYCLQTSPKLVQN), and 795-829 (EEFCCEECMSKYTVLFYQMAKCDACKRQGKLSESL). Ser-1030 carries the phosphoserine modification. Glycyl lysine isopeptide (Lys-Gly) (interchain with G-Cter in SUMO2) cross-links involve residues Lys-1035 and Lys-1061. 2 positions are modified to phosphoserine: Ser-1064 and Ser-1071. Glycyl lysine isopeptide (Lys-Gly) (interchain with G-Cter in SUMO2) cross-links involve residues Lys-1080 and Lys-1127. Positions 1124–1134 (SELKQFSKGET) are enriched in basic and acidic residues. Disordered stretches follow at residues 1124-1183 (SELK…KSIV) and 1231-1260 (KCGGVEQASSSPRSDPLGSTQDHALSQESS). Over residues 1160 to 1181 (SRTRRRHRDGFPQPRRRGRKKS) the composition is skewed to basic residues. Residues Ser-1181 and Ser-1256 each carry the phosphoserine modification. Over residues 1237–1260 (QASSSPRSDPLGSTQDHALSQESS) the composition is skewed to polar residues. Lys-1431 participates in a covalent cross-link: Glycyl lysine isopeptide (Lys-Gly) (interchain with G-Cter in SUMO2). Phosphoserine occurs at positions 1539, 1542, and 1547.

In terms of tissue distribution, expressed at higher level in heart, skeletal muscle, kidney and liver.

Plays a role in the regulation of cell morphology and cytoskeletal organization. This chain is Zinc finger MYM-type protein 4 (ZMYM4), found in Homo sapiens (Human).